The following is a 304-amino-acid chain: Killer cell immunoglobulin-like receptor 2DS5 (304 aa).

Residues 1–21 form the signal peptide; that stretch reads MSLMVISMACVAFFLLQGAWP. Topologically, residues 22–245 are extracellular; it reads HEGFRRKPSL…SETGNPRHLH (224 aa). Ig-like C2-type domains follow at residues 42–107 and 142–205; these read EETV…VTHS and GESV…FRDS. Cystine bridges form between cysteine 49–cysteine 100 and cysteine 149–cysteine 198. Asparagine 67, asparagine 84, asparagine 178, and asparagine 223 each carry an N-linked (GlcNAc...) asparagine glycan. Residues 246-264 traverse the membrane as a helical segment; it reads VLIGTSVVKLPFTILLFFL. Topologically, residues 265–304 are cytoplasmic; sequence LHRWCSNKKNASVMDQGPAGNRTVNREDSDEQDHQEVSYA. Residues 275–304 are disordered; it reads ASVMDQGPAGNRTVNREDSDEQDHQEVSYA. Residues 288–304 show a composition bias toward basic and acidic residues; sequence VNREDSDEQDHQEVSYA.

It belongs to the immunoglobulin superfamily. Interacts with TYROBP. Post-translationally, N-glycosylated, glycosylation varies depending on the allele which alters cell surface expression levels. In terms of tissue distribution, expressed on a discrete subset of peripheral blood NK cells.

Its subcellular location is the cell membrane. Functionally, activating natural killer (NK) receptor that recognizes C2 epitopes of HLA-C alleles. Bridging the innate and adaptive immune systems, NK cells express a number of cell surface receptors which either inhibit or stimulate their cytotoxicity. Able to activate NK cells citotoxicity and cytokine production such as IFNG. Receptor functions are attenuated even lost in some alleles, such as KIR2DS5*002 represented in this entry. This chain is Killer cell immunoglobulin-like receptor 2DS5, found in Homo sapiens (Human).